We begin with the raw amino-acid sequence, 364 residues long: DNA replication and repair protein RecF (364 aa).

30-37 is a binding site for ATP; the sequence is GLNAQGKS.

Belongs to the RecF family.

It localises to the cytoplasm. Functionally, the RecF protein is involved in DNA metabolism; it is required for DNA replication and normal SOS inducibility. RecF binds preferentially to single-stranded, linear DNA. It also seems to bind ATP. In Caldanaerobacter subterraneus subsp. tengcongensis (strain DSM 15242 / JCM 11007 / NBRC 100824 / MB4) (Thermoanaerobacter tengcongensis), this protein is DNA replication and repair protein RecF.